The primary structure comprises 229 residues: Large ribosomal subunit protein uL3 (229 aa).

Glutamine 151 is modified (N5-methylglutamine).

Belongs to the universal ribosomal protein uL3 family. Part of the 50S ribosomal subunit. Forms a cluster with proteins L14 and L19. In terms of processing, methylated by PrmB.

Its function is as follows. One of the primary rRNA binding proteins, it binds directly near the 3'-end of the 23S rRNA, where it nucleates assembly of the 50S subunit. In Paramagnetospirillum magneticum (strain ATCC 700264 / AMB-1) (Magnetospirillum magneticum), this protein is Large ribosomal subunit protein uL3.